The sequence spans 173 residues: SPbeta prophage-derived putative HNH homing endonuclease YosQ (173 aa).

A possible homing endonuclease, it is entirely encoded within the YosP intron. This chain is SPbeta prophage-derived putative HNH homing endonuclease YosQ (yosQ), found in Bacillus subtilis (strain 168).